We begin with the raw amino-acid sequence, 187 residues long: dCTP deaminase, dUMP-forming (187 aa).

DCTP-binding positions include 99-104 (KSSIAR), Asp-117, 125-127 (TLE), Gln-146, Tyr-159, Lys-166, and Gln-170. Glu-127 acts as the Proton donor/acceptor in catalysis.

It belongs to the dCTP deaminase family. Homotrimer.

The catalysed reaction is dCTP + 2 H2O = dUMP + NH4(+) + diphosphate. It functions in the pathway pyrimidine metabolism; dUMP biosynthesis; dUMP from dCTP: step 1/1. Its function is as follows. Bifunctional enzyme that catalyzes both the deamination of dCTP to dUTP and the hydrolysis of dUTP to dUMP without releasing the toxic dUTP intermediate. This is dCTP deaminase, dUMP-forming from Methanoculleus marisnigri (strain ATCC 35101 / DSM 1498 / JR1).